The following is a 257-amino-acid chain: Receptor expression-enhancing protein 4 (257 aa).

A run of 2 helical transmembrane segments spans residues M1 to Y21 and W42 to F62. A phosphoserine mark is found at S152 and S194. The disordered stretch occupies residues V177–S257. T196 bears the Phosphothreonine mark. Phosphoserine occurs at positions 202 and 253.

This sequence belongs to the DP1 family.

The protein resides in the endoplasmic reticulum membrane. Its function is as follows. Microtubule-binding protein required to ensure proper cell division and nuclear envelope reassembly by sequestering the endoplasmic reticulum away from chromosomes during mitosis. Probably acts by clearing the endoplasmic reticulum membrane from metaphase chromosomes. In Mus musculus (Mouse), this protein is Receptor expression-enhancing protein 4 (Reep4).